The primary structure comprises 1577 residues: Hemolysin (1577 aa).

Positions 1–29 are cleaved as a signal peptide; that stretch reads MKSKNFKLSPSGRLAASLAIIFVSLNAYG. Over residues 437–446 the composition is skewed to basic and acidic residues; that stretch reads EKESRSENGN. Disordered regions lie at residues 437-467, 1081-1103, 1169-1188, and 1213-1232; these read EKESRSENGNKRNHTSRLESGSWSNSHQTET, TDTHSESQSNVNGSANLKVGTTP, QSASSEHTEKGNNLSGGVQA, and KQDEKSVSREGGTINNSGNL. 3 stretches are compositionally biased toward polar residues: residues 454 to 467, 1081 to 1095, and 1169 to 1184; these read LESGSWSNSHQTET, TDTHSESQSNVNGSA, and QSASSEHTEKGNNLSG.

The protein resides in the cell outer membrane. Its function is as follows. Bacterial hemolysins are exotoxins that attack blood cell membranes and cause cell rupture by mechanisms not clearly defined. Cell-bound hemolysin, which releases heme-iron from erythrocytes by interaction with the erythrocyte membrane. HpmA requires HpmB function. The protein is Hemolysin (hpmA) of Proteus mirabilis.